The primary structure comprises 330 residues: Putative [LysW]-L-2-aminoadipate/[LysW]-L-glutamate phosphate reductase (330 aa).

Residue 10–13 (SGYI) coordinates NADP(+). Cys142 is an active-site residue. Asn297 serves as a coordination point for NADP(+).

It belongs to the NAGSA dehydrogenase family. Type 1 subfamily. LysY sub-subfamily.

It localises to the cytoplasm. It carries out the reaction [amino-group carrier protein]-C-terminal-N-(1-carboxy-5-oxopentan-1-yl)-L-glutamine + phosphate + NADP(+) = [amino-group carrier protein]-C-terminal-N-(1-carboxy-5-phosphooxy-5-oxopentan-1-yl)-L-glutamine + NADPH + H(+). The catalysed reaction is [amino-group carrier protein]-C-terminal-gamma-(L-glutamyl-5-semialdehyde)-L-glutamate + phosphate + NADP(+) = [amino-group carrier protein]-C-terminal-gamma-(5-phospho-L-glutamyl)-L-glutamate + NADPH + H(+). The protein operates within amino-acid biosynthesis; L-lysine biosynthesis via AAA pathway; L-lysine from L-alpha-aminoadipate (Thermus route): step 3/5. Its pathway is amino-acid biosynthesis; L-arginine biosynthesis. In terms of biological role, involved in both the arginine and lysine biosynthetic pathways. The polypeptide is Putative [LysW]-L-2-aminoadipate/[LysW]-L-glutamate phosphate reductase (Pyrococcus horikoshii (strain ATCC 700860 / DSM 12428 / JCM 9974 / NBRC 100139 / OT-3)).